The sequence spans 624 residues: Ceramide transfer protein (624 aa).

Polar residues predominate over residues 1–11; the sequence is MSDNQSWNSSG. A disordered region spans residues 1 to 24; sequence MSDNQSWNSSGSEEDPETESGPPV. In terms of domain architecture, PH spans 23–117; it reads PVERCGVLSK…WVDAIEQHKT (95 aa). Phosphoserine occurs at positions 126, 132, and 135. A disordered region spans residues 202-221; that stretch reads DDEDDFPTTRSDGDFLHNTN. The stretch at 263–303 forms a coiled coil; the sequence is IELMVKREESWQKRHDREVEKRRRVEEAYKNVMEELKKKPR. Ser-315 bears the Phosphoserine mark. The short motif at 321–327 is the FFAT element; the sequence is EFFDAVE. Tyr-372 carries the phosphotyrosine modification. Phosphoserine occurs at positions 373, 377, and 380. The START domain maps to 389 to 618; that stretch reads DVHRFSSQVE…FTSYVQEKTA (230 aa). An N-acylsphing-4-enine is bound by residues Glu-472, Gln-493, Asn-530, and Tyr-579.

In terms of assembly, interacts with VAPA and VAPB. Interaction with VAPB is less efficient than with VAPA. Interacts (via FFAT motif) with MOSPD2 (via MSP domain). Phosphorylation on Ser-132 decreases the affinity toward phosphatidylinositol 4-phosphate at Golgi membranes and reduces ceramide transfer activity. Inactivated by hyperphosphorylation of serine residues by CSNK1G2/CK1 that triggers dissociation from the Golgi complex, thus down-regulating ER-to-Golgi transport of ceramide and sphingomyelin synthesis.

The protein localises to the cytoplasm. It localises to the golgi apparatus. The protein resides in the endoplasmic reticulum. The catalysed reaction is N-hexadecanoylsphing-4-enine(in) = N-hexadecanoylsphing-4-enine(out). Functionally, shelters ceramides and diacylglycerol lipids inside its START domain and mediates the intracellular trafficking of ceramides and diacylglycerol lipids in a non-vesicular manner. This is Ceramide transfer protein (Cert1) from Mus musculus (Mouse).